We begin with the raw amino-acid sequence, 407 residues long: Frizzled/smoothened-like sans CRD protein J (407 aa).

An N-terminal signal peptide occupies residues 1–23; the sequence is MKFLFSVILVIISFLGISKIVNG. The Extracellular portion of the chain corresponds to 24–89; that stretch reads QIACPSPFLY…WNSFNKLVKQ (66 aa). Asn-37 carries an N-linked (GlcNAc...) asparagine glycan. The helical transmembrane segment at 90 to 110 threads the bilayer; sequence MGAVAFTCSAIIMIIYGPLMN. Residues 111–120 are Cytoplasmic-facing; the sequence is RSFFKFDRHT. The chain crosses the membrane as a helical span at residues 121–141; that stretch reads ITVFCFALSTFFIGVSDLMFA. Residues 142-169 are Extracellular-facing; it reads TNDVDMVCPESHRYARQTDKTCATNGVL. Residues 170–190 form a helical membrane-spanning segment; sequence FQFGWLGSVMWFAFLSIDGFF. Topologically, residues 191 to 199 are cytoplasmic; that stretch reads RASGKKMNK. Residues 200–220 form a helical membrane-spanning segment; sequence IAFAIVLASIWILNIVLSFAP. The Extracellular portion of the chain corresponds to 221-246; the sequence is MGGDQYGAYFVGQVNCWILVKNWQYA. The chain crosses the membrane as a helical span at residues 247–267; sequence FFWAELIVSLAIGFVGICLTI. Residues 268 to 285 are Cytoplasmic-facing; the sequence is YSLIRKTSDGNTLKHVTP. The chain crosses the membrane as a helical span at residues 286-306; the sequence is LILVFLLFCQYLYMIIFYGII. Residues 307–354 lie on the Extracellular side of the membrane; sequence NEKKDHYQNILAEQVGCIFNNALAKMKVPGIVYAGECTFNETITFSSQ. N-linked (GlcNAc...) asparagine glycosylation is present at Asn-346. Residues 355 to 375 form a helical membrane-spanning segment; that stretch reads YAFLFFVRLLGIEIFAFYLFS. Residues 376–407 are Cytoplasmic-facing; the sequence is KETLLLIKSSYIATMFGLGDKDAYDVELEETD.

It belongs to the G-protein coupled receptor Fz/Smo family.

Its subcellular location is the membrane. This chain is Frizzled/smoothened-like sans CRD protein J (fscJ), found in Dictyostelium discoideum (Social amoeba).